The sequence spans 953 residues: Pyruvate, phosphate dikinase, chloroplastic (953 aa).

The transit peptide at 1–77 (MMSSLSVEGM…VLNPVSPPVT (77 aa)) directs the protein to the chloroplast. Positions 55 to 74 (PELRSSGLTPPRAVLNPVSP) are disordered. T533 carries the post-translational modification Phosphothreonine; by PDRP1. The Tele-phosphohistidine intermediate role is filled by H535. Substrate-binding residues include R641, R698, E827, G848, T849, N850, and D851. Mg(2+) is bound at residue E827. D851 serves as a coordination point for Mg(2+). Catalysis depends on C913, which acts as the Proton donor.

Belongs to the PEP-utilizing enzyme family. As to quaternary structure, homotetramer. The cofactor is Mg(2+). Post-translationally, phosphorylation of Thr-533 in the dark inactivates the enzyme. Dephosphorylation upon light stimulation reactivates the enzyme. In terms of tissue distribution, isoform 1 mainly localized in mesophyll cells and only a low level is found in bundle sheath cells. Isoform 2 is expressed in roots and stems.

The protein resides in the plastid. It localises to the chloroplast. It is found in the cytoplasm. It catalyses the reaction pyruvate + phosphate + ATP = phosphoenolpyruvate + AMP + diphosphate + H(+). Its pathway is photosynthesis; C4 acid pathway. Its activity is regulated as follows. Activated by light-induced dephosphorylation. Inhibited by dark-induced phosphorylation. Both reactions are catalyzed by PDRP1. Its function is as follows. Formation of phosphoenolpyruvate, which is the primary acceptor of CO(2) in C4 and some Crassulacean acid metabolism plants. This Flaveria trinervia (Clustered yellowtops) protein is Pyruvate, phosphate dikinase, chloroplastic (PPDK).